Reading from the N-terminus, the 206-residue chain is Small ribosomal subunit protein uS4A (206 aa).

Positions 96–156 (GRLDNVVYRM…EKAKKQSRIG (61 aa)) constitute an S4 RNA-binding domain.

It belongs to the universal ribosomal protein uS4 family. Part of the 30S ribosomal subunit. Contacts protein S5. The interaction surface between S4 and S5 is involved in control of translational fidelity.

One of the primary rRNA binding proteins, it binds directly to 16S rRNA where it nucleates assembly of the body of the 30S subunit. In terms of biological role, with S5 and S12 plays an important role in translational accuracy. This Psychromonas ingrahamii (strain DSM 17664 / CCUG 51855 / 37) protein is Small ribosomal subunit protein uS4A.